The following is a 178-amino-acid chain: Colicin-A immunity protein (178 aa).

Residues 1-13 are Cytoplasmic-facing; the sequence is MMNEHSIDTDNRK. Residues 14-37 traverse the membrane as a helical segment; the sequence is ANNALYLFIIIGLIPLLCIFVVYY. Residues 38–68 lie on the Periplasmic side of the membrane; sequence KTPDALLLRKIATSTENLPSITSSYNPLMTK. A helical transmembrane segment spans residues 69–89; sequence VMDIYCKTAPFLALILYILTF. At 90 to 105 the chain is on the cytoplasmic side; it reads KIRKLINNTDRNTVLR. Residues 106–123 form a helical membrane-spanning segment; that stretch reads SCLLSPLVYAAIVYLFCF. The Periplasmic portion of the chain corresponds to 124–142; it reads RNFELTTAGRPVRLMATND. The chain crosses the membrane as a helical span at residues 143 to 165; it reads ATLLLFYIGLYSIIFFTTYITLF. The Cytoplasmic portion of the chain corresponds to 166 to 178; the sequence is TPVTAFKLLKKRQ.

The protein resides in the cell inner membrane. Functionally, this protein is able to protect a cell, which harbors the plasmid ColA encoding colicin A, against colicin A. In Citrobacter freundii, this protein is Colicin-A immunity protein (cai).